A 404-amino-acid polypeptide reads, in one-letter code: MSPSDVPINWKRNLTVTWLGCFLTGAAFSLVMPFLPLYVEQLGVTGHSALNMWSGLVFSITFLFSAIASPFWGGLADRKGRKIMLLRSALGMAIVMLLMGMAQNIWQFLILRALLGLLGGFIPNANALIATQVPRHKSGWALGTLSTGGVSGALLGPLAGGLLADHYGLRPVFFITASVLFICFLLTFFFIRENFLPVSKKEMLHVREVVASLKNPRLVLSLFVTTLIIQVATGSIAPILTLYVRELAGDVSNIAFISGMIASVPGVAALLSAPRLGKLGDRIGPEKILIVALIISVLLLIPMSFVQTPWQLALLRFLLGAADGALLPAVQTLLVYNSTNQIAGRIFSYNQSFRDIGNVTGPLMGAAISASYGFRAVFCVTAGVVLFNAIYSWNSLRRRRLAIE.

Transmembrane regions (helical) follow at residues 19–39 (LGCF…PLYV), 56–76 (LVFS…GGLA), 90–110 (LGMA…QFLI), 113–133 (ALLG…ATQV), 144–164 (TLST…GLLA), 171–191 (PVFF…FFFI), 222–242 (LFVT…ILTL), 254–274 (IAFI…LSAP), 288–308 (ILIV…FVQT), 317–337 (FLLG…LVYN), and 376–396 (AVFC…WNSL).

It belongs to the major facilitator superfamily. DHA1 family. MdtG (TC 2.A.1.2.20) subfamily.

It localises to the cell inner membrane. In Salmonella typhimurium (strain LT2 / SGSC1412 / ATCC 700720), this protein is Multidrug resistance protein MdtG.